A 125-amino-acid chain; its full sequence is Succinate dehydrogenase assembly factor 3, mitochondrial (125 aa).

Residues 1 to 30 (MPGKHVSRVRALYRRILLLHRALPPDLKAL) constitute a mitochondrion transit peptide.

Belongs to the complex I LYR family. SDHAF3 subfamily. As to quaternary structure, interacts with Sdhb within an Sdha-Sdhb subcomplex.

It is found in the mitochondrion matrix. Its function is as follows. Plays an essential role in the assembly of succinate dehydrogenase (SDH), an enzyme complex (also referred to as respiratory complex II) that is a component of both the tricarboxylic acid (TCA) cycle and the mitochondrial electron transport chain, and which couples the oxidation of succinate to fumarate with the reduction of ubiquinone (coenzyme Q) to ubiquinol. Promotes maturation of the iron-sulfur protein subunit Sdhb of the SDH catalytic dimer, protecting it from the deleterious effects of oxidants. May act together with SDHAF1. The polypeptide is Succinate dehydrogenase assembly factor 3, mitochondrial (Mus musculus (Mouse)).